We begin with the raw amino-acid sequence, 352 residues long: 4-hydroxybenzaldehyde synthase, chloroplastic (352 aa).

Asn122 carries N-linked (GlcNAc...) asparagine glycosylation. 2 cysteine pairs are disulfide-bonded: Cys159/Cys199 and Cys190/Cys231. Asn247 carries an N-linked (GlcNAc...) asparagine glycan. Cys289 and Cys339 form a disulfide bridge. Active-site residues include His298 and Asn318.

This sequence belongs to the peptidase C1 family. As to quaternary structure, forms homodimers, homotrimers and homotetramers. In terms of tissue distribution, mainly expressed in pods, but also present in stems, roots, leaves and embryos (at protein level).

It localises to the plastid. The protein resides in the chloroplast. It carries out the reaction (E)-4-coumarate + H2O = 4-hydroxybenzaldehyde + acetate. It functions in the pathway aromatic compound metabolism; phenylpropanoid biosynthesis. Its activity is regulated as follows. Inhibited by ascorbate. Functionally, involved in the biosynthesis of vanillin (4-hydroxy-3-methoxy-benzaldehyde) and derivative natural products, key components of vanilla pods flavor. Catalyzes the conversion of (E)-4-coumarate to 4-hydroxybenzaldehyde, a vanillin precursor. Mediates the conversion of ferulic acid to 3-methoxy-4-hydroxybenzaldehyde with a very low efficiency. Cannot use cinnamic, caffeic, sinapic and o-coumaric acids as substrates. This Vanilla planifolia (Vanilla) protein is 4-hydroxybenzaldehyde synthase, chloroplastic.